The following is a 1505-amino-acid chain: ABC transporter C family member 13 (1505 aa).

12 helical membrane passes run 11–31 (EAAAAAAHAALLALALLLLLL), 54–68 (AVDGGLAAASSVGAW), 71–91 (AALACCGYALLAQVAALSYEV), 102–122 (ALLLPAVQALAWAALLALAMQ), 131–151 (FPVLVRVWWVVSFVLCVGIAY), 171–191 (MVANFASAPALGFLCLVGVMG), 313–333 (AFAAVNTIVSYVGPYLISYFV), 336–356 (LSGKIEFPHEGYILASVFFVA), 367–387 (WYLGVDVMGIHVKSGLTAMVY), 421–441 (AWYFHDIWMLPLQIILALAIL), 447–467 (IAMVSTLVATVLSIAASVPVA), and 534–554 (FVFWSSPIFVAVITFGTCILL). Positions 314–589 (FAAVNTIVSY…FPDLISMIAQ (276 aa)) constitute an ABC transmembrane type-1 1 domain. The region spanning 623–846 (ININDATFSW…GTDFNALVCA (224 aa)) is the ABC transporter 1 domain. 658–665 (GVIGSGKS) is a binding site for ATP. Residues 881–897 (DNLKNKVSNNEKPSSTR) show a composition bias toward polar residues. Positions 881-919 (DNLKNKVSNNEKPSSTRGIKEKKKKPEERKKKRSVQEEE) are disordered. The segment covering 904 to 919 (KKPEERKKKRSVQEEE) has biased composition (basic and acidic residues). The next 6 helical transmembrane spans lie at 940-960 (GTLIPLIILAQTMFQVLQIAS), 980-1000 (SVVLLVVYMSLAFGSSLFVFV), 1055-1077 (IAFRLGGFASTTIQLLGIVAVMS), 1081-1103 (WQVLILIVPMAVACMWMQRYYIA), 1149-1169 (LLDCFARPLFSSLAAIEWLCL), and 1174-1194 (LSTFVFAFCMAILVSFPPGTI). Residues 945 to 1215 (LIILAQTMFQ…GLNLNARMSR (271 aa)) enclose the ABC transmembrane type-1 2 domain. The ABC transporter 2 domain occupies 1262–1496 (IELVDLKVRY…KSSMFMQLVS (235 aa)). ATP is bound at residue 1296 to 1303 (GRTGSGKS).

Belongs to the ABC transporter superfamily. ABCC family. Conjugate transporter (TC 3.A.1.208) subfamily.

The protein localises to the membrane. ABC transporter that may affect phytic acid transport and compartmentalization. May function directly or indirectly in removing phytic acid from the cytosol or in vesicle trafficking. Required for phytic acid accumulation in developing seeds. Phytic acid is the primary storage form of phosphorus in cereal grains and other plant seeds. In Oryza sativa subsp. indica (Rice), this protein is ABC transporter C family member 13.